The chain runs to 453 residues: tRNA modification GTPase MnmE (453 aa).

(6S)-5-formyl-5,6,7,8-tetrahydrofolate is bound by residues Arg28, Glu86, and Lys125. A TrmE-type G domain is found at 221 to 375 (GIKIAIVGEP…LIKYLEETSL (155 aa)). Asn231 lines the K(+) pocket. GTP contacts are provided by residues 231-236 (NAGKSS), 250-256 (TNIPGTT), and 276-279 (DTAG). Ser235 is a binding site for Mg(2+). Residues Thr250, Ile252, and Thr255 each contribute to the K(+) site. Residue Thr256 participates in Mg(2+) binding. (6S)-5-formyl-5,6,7,8-tetrahydrofolate is bound at residue Lys453.

It belongs to the TRAFAC class TrmE-Era-EngA-EngB-Septin-like GTPase superfamily. TrmE GTPase family. As to quaternary structure, homodimer. Heterotetramer of two MnmE and two MnmG subunits. K(+) serves as cofactor.

The protein resides in the cytoplasm. In terms of biological role, exhibits a very high intrinsic GTPase hydrolysis rate. Involved in the addition of a carboxymethylaminomethyl (cmnm) group at the wobble position (U34) of certain tRNAs, forming tRNA-cmnm(5)s(2)U34. This is tRNA modification GTPase MnmE from Mycoplasmoides gallisepticum (strain R(low / passage 15 / clone 2)) (Mycoplasma gallisepticum).